The following is a 603-amino-acid chain: MNHIRNFSIIAHIDHGKSTLADRLIQRCGGLQEREMEAQVLDSMDIEKERGITIKAQTASLKYKAQNGQIYNLNLIDTPGHVDFSYEVSRSLSACEGALLVVDASQGVEAQTVANCYTALDLGVEVVPVLNKMDLPNADPDNAKIEIEDVIGIDATDAIACSAKTGMGIDEILEAVVARMPPPRGNPAGALRAMIVDSWFDTYVGVVMLVRVVDGRLAKGERIKMMATGTTYNADSLGVFTPANEPRESLEAGEVGYIIAGIRELQAAKVGDTITLIKAGTGGAAFTATEPLPGFKEIQPQVFAGLYPTEASEYESLRDSLEKLKLNDSSLRYQPEVSQALGFGFRCGFLGLLHMEIVQERLEREFDQDLITTAPSVEYQVVQADGTVKMVENPSKMPDQGRLDEVREPIVTVHLYMPQDYVGAVMTLANQKRGVQMNMAYHGRQVMLTYEMPLAEIVMDFFDKLKSVSRGYASMDYEFKEYRAADVVKVDILLNGDKVDALSIIVHRSQSQYRGRAVVSKMREIISRQMYDVAIQAAIGSNVIARETIKAMRKNVIAKCYGGDISRKHKLLDKQKEGKKRMKQIGSVSVPQEAFLAILQVDA.

Positions 2 to 184 (NHIRNFSIIA…AVVARMPPPR (183 aa)) constitute a tr-type G domain. GTP contacts are provided by residues 14-19 (DHGKST) and 131-134 (NKMD).

Belongs to the TRAFAC class translation factor GTPase superfamily. Classic translation factor GTPase family. LepA subfamily.

The protein resides in the cell inner membrane. The enzyme catalyses GTP + H2O = GDP + phosphate + H(+). Required for accurate and efficient protein synthesis under certain stress conditions. May act as a fidelity factor of the translation reaction, by catalyzing a one-codon backward translocation of tRNAs on improperly translocated ribosomes. Back-translocation proceeds from a post-translocation (POST) complex to a pre-translocation (PRE) complex, thus giving elongation factor G a second chance to translocate the tRNAs correctly. Binds to ribosomes in a GTP-dependent manner. The protein is Elongation factor 4 of Albidiferax ferrireducens (strain ATCC BAA-621 / DSM 15236 / T118) (Rhodoferax ferrireducens).